Consider the following 138-residue polypeptide: Small ribosomal subunit protein bS6 (138 aa).

The interval 94–138 (VKQDGPLPTPKPTSKEDETEKEEVKPTEDKTESPAQEEKKEDSKE) is disordered. Residues 106 to 138 (TSKEDETEKEEVKPTEDKTESPAQEEKKEDSKE) show a composition bias toward basic and acidic residues.

It belongs to the bacterial ribosomal protein bS6 family.

In terms of biological role, binds together with bS18 to 16S ribosomal RNA. The chain is Small ribosomal subunit protein bS6 from Prochlorococcus marinus (strain NATL1A).